The primary structure comprises 131 residues: Profilin-5 (131 aa).

Cysteines 13 and 115 form a disulfide. An Involved in PIP2 interaction motif is present at residues 81 to 97 (AVIRGKKGAGGITIKKT). At threonine 111 the chain carries Phosphothreonine.

It belongs to the profilin family. Occurs in many kinds of cells as a complex with monomeric actin in a 1:1 ratio. Post-translationally, phosphorylated by MAP kinases.

It is found in the cytoplasm. The protein resides in the cytoskeleton. Binds to actin and affects the structure of the cytoskeleton. At high concentrations, profilin prevents the polymerization of actin, whereas it enhances it at low concentrations. The chain is Profilin-5 from Phleum pratense (Common timothy).